The chain runs to 160 residues: Large ribosomal subunit protein uL30m (160 aa).

The transit peptide at 1-34 (MAGVLRSAFPRPPCRLQTVKKGAESLIGTEWIRH) directs the protein to the mitochondrion. Positions 44–64 (KVFQPKPEDHEKYGGDPQNPH) are disordered.

It belongs to the universal ribosomal protein uL30 family. As to quaternary structure, component of the mitochondrial ribosome large subunit (39S) which comprises a 16S rRNA and about 50 distinct proteins.

The protein resides in the mitochondrion. In Mus musculus (Mouse), this protein is Large ribosomal subunit protein uL30m (Mrpl30).